The chain runs to 335 residues: SLAM family member 7 (335 aa).

An N-terminal signal peptide occupies residues 1–22 (MAGSPTCLTLIYILWQLTGSAA). The region spanning 23–124 (SGPVKELVGS…PSTQEYVLHV (102 aa)) is the Ig-like V-type domain. At 23–226 (SGPVKELVGS…GAADDPDSSM (204 aa)) the chain is on the extracellular side. N-linked (GlcNAc...) asparagine glycosylation is found at N98, N142, N148, N172, N176, and N204. Residues 131-206 (PKVTMGLQSN…ARNPVSRNFS (76 aa)) form the Ig-like C2-type domain. Cystine bridges form between C145–C215 and C151–C195. Residues 227-247 (VLLCLLLVPLLLSLFVLGLFL) form a helical membrane-spanning segment. Over 248-335 (WFLKRERQEE…PRLFAYENVI (88 aa)) the chain is Cytoplasmic. The tract at residues 278-296 (SGENTEYDTIPHTNRTILK) is interaction with FYN when phosphorylated at Tyr-284. The ITSM motif lies at 302–307 (TVYSTV).

As to quaternary structure, isoform 1 binds to SH2D1A when its cytoplasmic tail is phosphorylated in the presence of FYN (in vitro); low affinity binding, the physiological relevance of the interaction is questioned. Interacts with SH2D1B; in NK cells. Interacts (via ITSM phosphorylated on Tyr-302) with SH2D1B, PTPN6/SHP-1, PTPN11/SHP-2, INPP5D/SHIP1, CSK and FYN. Expressed in spleen, lymph node, peripheral blood leukocytes, bone marrow, small intestine, stomach, appendix, lung and trachea. Expression was detected in NK cells, activated B-cells, NK-cell line but not in promyelocytic, B-, or T-cell lines. Expressed in monocytes. Isoform 3 is expressed at much lower level than isoform 1.

The protein resides in the membrane. Functionally, self-ligand receptor of the signaling lymphocytic activation molecule (SLAM) family. SLAM receptors triggered by homo- or heterotypic cell-cell interactions are modulating the activation and differentiation of a wide variety of immune cells and thus are involved in the regulation and interconnection of both innate and adaptive immune response. Activities are controlled by presence or absence of small cytoplasmic adapter proteins, SH2D1A/SAP and/or SH2D1B/EAT-2. Isoform 1 mediates NK cell activation through a SH2D1A-independent extracellular signal-regulated ERK-mediated pathway. Positively regulates NK cell functions by a mechanism dependent on phosphorylated SH2D1B. Downstream signaling implicates PLCG1, PLCG2 and PI3K. In addition to heterotypic NK cells-target cells interactions also homotypic interactions between NK cells may contribute to activation. However, in the absence of SH2D1B, inhibits NK cell function. Also acts inhibitory in T-cells. May play a role in lymphocyte adhesion. In LPS-activated monocytes negatively regulates production of pro-inflammatory cytokines. Its function is as follows. Isoform 3 does not mediate any NK cell activation. This chain is SLAM family member 7 (SLAMF7), found in Homo sapiens (Human).